Here is a 236-residue protein sequence, read N- to C-terminus: Small ribosomal subunit protein uS5 (236 aa).

An S5 DRBM domain is found at 61 to 124 (ENQEIIDIAL…NYAKLNIIEI (64 aa)).

It belongs to the universal ribosomal protein uS5 family. Part of the 30S ribosomal subunit. Contacts protein S4.

Its function is as follows. With S4 and S12 plays an important role in translational accuracy. The polypeptide is Small ribosomal subunit protein uS5 (Pyrococcus horikoshii (strain ATCC 700860 / DSM 12428 / JCM 9974 / NBRC 100139 / OT-3)).